A 330-amino-acid polypeptide reads, in one-letter code: Mas-related G-protein coupled receptor member X2 (330 aa).

The Extracellular portion of the chain corresponds to 1 to 33; the sequence is MDPTTPAWGNESTTMNGNDQALPLLCGKETLIP. The helical transmembrane segment at 34 to 54 threads the bilayer; sequence VFLILFIALVGLVGNGFVLWL. The Cytoplasmic portion of the chain corresponds to 55 to 63; that stretch reads LGFCMRRNA. Residues 64-84 traverse the membrane as a helical segment; that stretch reads FSVYVLSLAGADFLFLCFQLI. Over 85–96 the chain is Extracellular; the sequence is NCLVYLSNFFCS. The helical transmembrane segment at 97–117 threads the bilayer; sequence ISIDFPSFFTTVMTCAYLAGL. Topologically, residues 118–144 are cytoplasmic; the sequence is SMLSTISTERCLSVLWPIWYRCRRPRH. Residues 145–165 traverse the membrane as a helical segment; sequence LSAVVCVLLWALSLLLSILEG. The Extracellular segment spans residues 166–184; the sequence is KFCGFFFSDGDSGWCQTFD. Residues 185–205 traverse the membrane as a helical segment; the sequence is FITAAWLIFLFMVLCGSSLAL. Over 206–228 the chain is Cytoplasmic; the sequence is LVRILCGSRGLPLTRLYLTILLT. The helical transmembrane segment at 229 to 249 threads the bilayer; the sequence is VLVFLLCGLPFGIQWFLILWI. The Extracellular segment spans residues 250–264; the sequence is WENSDVLFCHIHPVS. A helical transmembrane segment spans residues 265 to 285; the sequence is VVLSSLNSSANPIIYFFVGTF. Residues 286-330 are Cytoplasmic-facing; the sequence is RKQWRLQQPILKLALQRALQDTAEVDHSEGCFRQGTPEMSRSSLV.

The protein belongs to the G-protein coupled receptor 1 family. Mas subfamily.

It localises to the cell membrane. In terms of biological role, mast cell-specific receptor for basic secretagogues, i.e. cationic amphiphilic drugs, as well as endo- or exogenous peptides, consisting of a basic head group and a hydrophobic core. Recognizes and binds small molecules containing a cyclized tetrahydroisoquinoline (THIQ), such as non-steroidal neuromuscular blocking drugs (NMBDs), including tubocurarine and atracurium. In response to these compounds, mediates pseudo-allergic reactions characterized by histamine release, inflammation and airway contraction. The sequence is that of Mas-related G-protein coupled receptor member X2 (MRGPRX2) from Pongo pygmaeus (Bornean orangutan).